A 182-amino-acid polypeptide reads, in one-letter code: Putative adenylate kinase (182 aa).

ATP contacts are provided by glycine 10, glycine 12, lysine 13, threonine 14, and serine 15. The interval 30–53 (HLNEMIKEEHLYTEVDEVRDAVIA) is NMP. Residues 104–114 (ARGYSEEKIRE) are LID. The ATP site is built by arginine 105 and lysine 143.

It belongs to the adenylate kinase family. AK6 subfamily. In terms of assembly, interacts with uS11. Not a structural component of 40S pre-ribosomes, but transiently interacts with them by binding to uS11.

It catalyses the reaction AMP + ATP = 2 ADP. It carries out the reaction ATP + H2O = ADP + phosphate + H(+). Functionally, broad-specificity nucleoside monophosphate (NMP) kinase that catalyzes the reversible transfer of the terminal phosphate group between nucleoside triphosphates and monophosphates. Also has ATPase activity. Involved in the late maturation steps of the 30S ribosomal particles, specifically 16S rRNA maturation. While NMP activity is not required for ribosome maturation, ATPase activity is. Associates transiently with small ribosomal subunit protein uS11. ATP hydrolysis breaks the interaction with uS11. May temporarily remove uS11 from the ribosome to enable a conformational change of the ribosomal RNA that is needed for the final maturation step of the small ribosomal subunit. In Methanosarcina barkeri (strain Fusaro / DSM 804), this protein is Putative adenylate kinase.